The chain runs to 170 residues: Phosphopantetheine adenylyltransferase (170 aa).

Threonine 9 provides a ligand contact to substrate. Residues threonine 9–phenylalanine 10 and histidine 17 contribute to the ATP site. Positions 41, 73, and 87 each coordinate substrate. Residues glycine 88–arginine 90, glutamate 98, and tyrosine 123–threonine 129 contribute to the ATP site.

This sequence belongs to the bacterial CoaD family. In terms of assembly, homohexamer. The cofactor is Mg(2+).

Its subcellular location is the cytoplasm. It catalyses the reaction (R)-4'-phosphopantetheine + ATP + H(+) = 3'-dephospho-CoA + diphosphate. The protein operates within cofactor biosynthesis; coenzyme A biosynthesis; CoA from (R)-pantothenate: step 4/5. Functionally, reversibly transfers an adenylyl group from ATP to 4'-phosphopantetheine, yielding dephospho-CoA (dPCoA) and pyrophosphate. The sequence is that of Phosphopantetheine adenylyltransferase from Bordetella petrii (strain ATCC BAA-461 / DSM 12804 / CCUG 43448).